Reading from the N-terminus, the 649-residue chain is ENTH domain-containing protein C19F8.03c (649 aa).

Positions 2–136 constitute an ENTH domain; it reads SPSKWLLTYE…VDYAQVGDAP (135 aa). Disordered regions lie at residues 280–382, 409–440, and 590–649; these read YLQN…NELE, LSAE…PNDS, and FTHG…PFRS. A phosphoserine mark is found at Ser-285 and Ser-287. Residues 299 to 308 show a composition bias toward basic residues; sequence PTLRKKKSIP. Composition is skewed to polar residues over residues 313–326 and 340–349; these read ESSS…TVQQ and PETQRTTSRI. Acidic residues predominate over residues 352–381; that stretch reads QEEEIKEEEMEGEEEEEEEEVPNYESENEL. Composition is skewed to polar residues over residues 409–418, 614–624, and 635–649; these read LSAEGTSASP, TPYTASKNPFS, and ARNS…PFRS. Position 414 is a phosphothreonine (Thr-414). Phosphoserine is present on Ser-417.

It is found in the cytoplasm. The chain is ENTH domain-containing protein C19F8.03c from Schizosaccharomyces pombe (strain 972 / ATCC 24843) (Fission yeast).